The chain runs to 211 residues: BAG family molecular chaperone regulator 2 (211 aa).

Residue A2 is modified to N-acetylalanine. S20, S31, and S73 each carry phosphoserine. A coiled-coil region spans residues 20–61 (SMADRSSRLLESLDQLELRVEALREAATAVEQEKEILLEMIH). The BAG domain maps to 109–189 (SLKHATRIID…NIENSDKAIK (81 aa)).

As to quaternary structure, binds to the ATPase domain of HSP/HSC70 chaperones. May interact with NWD1. Interacts with HSPA1A (via NBD), HSPA1B (via NBD) and HSPA8. May interact with DNJC9; the interaction seems to be histone-dependent.

Co-chaperone for HSP70 and HSC70 chaperone proteins. Acts as a nucleotide-exchange factor (NEF) promoting the release of ADP from the HSP70 and HSC70 proteins thereby triggering client/substrate protein release. This Homo sapiens (Human) protein is BAG family molecular chaperone regulator 2 (BAG2).